A 651-amino-acid chain; its full sequence is Sodium/potassium/calcium exchanger 2 (651 aa).

The Cytoplasmic portion of the chain corresponds to 1–38; it reads MALCKKTVGSVLEEWCLNEPLFGCKRHQNVRKKLRLIR. A helical membrane pass occupies residues 39-59; sequence IIGLLVSVVAISTFSLSISAF. The Extracellular segment spans residues 60–134; that stretch reads FKMETHSTVL…DLFSLEERRK (75 aa). Positions 92 to 123 are disordered; it reads QNEGSTPDSPTSMKHEAEHDNATEEHSKGEYP. The span at 93-103 shows a compositional bias: polar residues; sequence NEGSTPDSPTS. A compositionally biased stretch (basic and acidic residues) spans 104-122; that stretch reads MKHEAEHDNATEEHSKGEY. N-linked (GlcNAc...) asparagine glycosylation is present at N112. The chain crosses the membrane as a helical span at residues 135–155; the sequence is GAVILHVIGMIYMFIALAIVC. The Cytoplasmic segment spans residues 156–179; it reads DEFFVPSLTVITEKLSISDDVAGA. Residues 176-216 form an Alpha-1 repeat; sequence VAGATFMAAGGSAPELFTSLIGVFISHSNVGIGTIVGSAVF. A helical transmembrane segment spans residues 180 to 200; sequence TFMAAGGSAPELFTSLIGVFI. At 201–206 the chain is on the extracellular side; the sequence is SHSNVG. Residues 207 to 227 form a helical membrane-spanning segment; sequence IGTIVGSAVFNILFVIGMCAL. The Cytoplasmic segment spans residues 228–245; it reads FSREILNLTWWPLFRDVS. A helical membrane pass occupies residues 246-266; it reads FYIVDLILLIIFFLDNLIMWW. The Extracellular portion of the chain corresponds to 267–459; sequence ESLTLLTAYF…SLAWPDTPRK (193 aa). The segment covering 304-322 has biased composition (basic and acidic residues); that stretch reads ATTGDAEGKSPTAGDKDDQ. Residues 304–338 are disordered; the sequence is ATTGDAEGKSPTAGDKDDQTLTTKPRLQRGGSSAS. Residues 323–338 are compositionally biased toward polar residues; the sequence is TLTTKPRLQRGGSSAS. The helical transmembrane segment at 460-480 threads the bilayer; sequence QLTYLLVLPIVFPLWVSLPDV. Residues 481-487 lie on the Cytoplasmic side of the membrane; sequence RNPRSRK. A helical membrane pass occupies residues 488 to 508; that stretch reads FFPITFFGSISWIAFFSYLMV. The Extracellular portion of the chain corresponds to 509–523; it reads WWAHQVGETIGISEE. The chain crosses the membrane as a helical span at residues 524 to 544; that stretch reads IMGLTILAAGTSIPDLITSVI. One copy of the Alpha-2 repeat lies at 531-562; it reads AAGTSIPDLITSVIVARKGLGDMAVSSSVGSN. The Cytoplasmic segment spans residues 545–562; that stretch reads VARKGLGDMAVSSSVGSN. A helical membrane pass occupies residues 563-583; it reads IFDITVGLPLPWLLYAVINNF. The Extracellular segment spans residues 584–592; sequence SPVTVSSNG. The chain crosses the membrane as a helical span at residues 593 to 613; it reads LFCAIVLLFIMLLFVILSIAF. At 614–620 the chain is on the cytoplasmic side; that stretch reads CKWRMNK. A helical transmembrane segment spans residues 621-641; the sequence is FLGFLMFGLYFVFLIVSVLLE. The Extracellular segment spans residues 642–651; the sequence is DKVIQCPVSI.

This sequence belongs to the Ca(2+):cation antiporter (CaCA) (TC 2.A.19) family. SLC24A subfamily. Retinal cones. Found in the cone inner segment layer and in a subpopulation of ganglion cells.

It localises to the cell membrane. It catalyses the reaction Ca(2+)(out) + K(+)(out) + 4 Na(+)(in) = Ca(2+)(in) + K(+)(in) + 4 Na(+)(out). Its function is as follows. Calcium, potassium:sodium antiporter that transports 1 Ca(2+) and 1 K(+) in exchange for 4 Na(+). Required for learming and memory by regulating neuronal Ca(2+), which is essential for the development of synaptic plasticity. In Gallus gallus (Chicken), this protein is Sodium/potassium/calcium exchanger 2 (SLC24A2).